The chain runs to 112 residues: Large ribosomal subunit protein eL36y (112 aa).

A compositionally biased stretch (basic residues) spans 79–88; the sequence is KLGTHKRAKR. The segment at 79-112 is disordered; sequence KLGTHKRAKRKREEMSSVLRKMRSGGGGATEKKK. The span at 102–112 shows a compositional bias: gly residues; it reads SGGGGATEKKK.

This sequence belongs to the eukaryotic ribosomal protein eL36 family.

The polypeptide is Large ribosomal subunit protein eL36y (RPL36B) (Arabidopsis thaliana (Mouse-ear cress)).